Consider the following 556-residue polypeptide: 2-succinyl-5-enolpyruvyl-6-hydroxy-3-cyclohexene-1-carboxylate synthase (556 aa).

It belongs to the TPP enzyme family. MenD subfamily. In terms of assembly, homodimer. Mg(2+) is required as a cofactor. Mn(2+) serves as cofactor. It depends on thiamine diphosphate as a cofactor.

It catalyses the reaction isochorismate + 2-oxoglutarate + H(+) = 5-enolpyruvoyl-6-hydroxy-2-succinyl-cyclohex-3-ene-1-carboxylate + CO2. The protein operates within quinol/quinone metabolism; 1,4-dihydroxy-2-naphthoate biosynthesis; 1,4-dihydroxy-2-naphthoate from chorismate: step 2/7. Its pathway is quinol/quinone metabolism; menaquinone biosynthesis. Its function is as follows. Catalyzes the thiamine diphosphate-dependent decarboxylation of 2-oxoglutarate and the subsequent addition of the resulting succinic semialdehyde-thiamine pyrophosphate anion to isochorismate to yield 2-succinyl-5-enolpyruvyl-6-hydroxy-3-cyclohexene-1-carboxylate (SEPHCHC). In Klebsiella pneumoniae (strain 342), this protein is 2-succinyl-5-enolpyruvyl-6-hydroxy-3-cyclohexene-1-carboxylate synthase.